A 570-amino-acid chain; its full sequence is DNA polymerase/3'-5' exonuclease PolX (570 aa).

Residues 1–315 (MHKKDIIRLL…PLIPPEIRES (315 aa)) are DNA polymerase type-X. Positions 193, 195, and 240 each coordinate a divalent metal cation. Residues 333-570 (QIKGDLHMHS…DVEAFLKRND (238 aa)) are 3'-5' exonuclease. The Mn(2+) site is built by His-339, His-341, His-371, Glu-410, His-437, His-465, Asp-526, and His-528.

The protein in the N-terminal section; belongs to the DNA polymerase type-X family. It in the C-terminal section; belongs to the PHP family. Monomer. The cofactor is Mn(2+). Requires Mg(2+) as cofactor.

It catalyses the reaction DNA(n) + a 2'-deoxyribonucleoside 5'-triphosphate = DNA(n+1) + diphosphate. The enzyme catalyses Exonucleolytic cleavage in the 3'- to 5'-direction to yield nucleoside 5'-phosphates.. With respect to regulation, the polymerization activity is inhibited in the presence of 2'-3'-dideoxynucleoside 5'-triphosphate (ddNTP). Its function is as follows. Strictly DNA-template-directed DNA polymerase, preferentially acting on DNA structures containing gaps from one to a few nucleotides and bearing a phosphate group at the 5' end of the downstream DNA. The fact that PolX is able to conduct filling of a single-nucleotide gap, allowing further sealing of the resulting nick by a DNA ligase, points to a putative role in base excision repair (BER) during the B.subtilis life cycle. Moreover, also possesses a 3'-5' exonuclease activity able to edit unpaired 3'-termini in a gapped DNA substrate and likely involved in resecting unannealed 3'-termini during DNA repair. The same PolX molecule could perform the subsequent gap-filling step. Does not display 5'-deoxyribose 5'-phosphate (dRP) lyase activity, as predicted by the lack of the lysine and tyrosine residues responsible for the dRP lyase activity in some other PolX members. This chain is DNA polymerase/3'-5' exonuclease PolX (polX), found in Bacillus subtilis (strain 168).